The sequence spans 171 residues: ATP synthase subunit b (171 aa).

Residues 19 to 39 (VGVGLILFIAIVIWAKAPAMI) form a helical membrane-spanning segment.

The protein belongs to the ATPase B chain family. F-type ATPases have 2 components, F(1) - the catalytic core - and F(0) - the membrane proton channel. F(1) has five subunits: alpha(3), beta(3), gamma(1), delta(1), epsilon(1). F(0) has three main subunits: a(1), b(2) and c(10-14). The alpha and beta chains form an alternating ring which encloses part of the gamma chain. F(1) is attached to F(0) by a central stalk formed by the gamma and epsilon chains, while a peripheral stalk is formed by the delta and b chains.

The protein localises to the cell inner membrane. F(1)F(0) ATP synthase produces ATP from ADP in the presence of a proton or sodium gradient. F-type ATPases consist of two structural domains, F(1) containing the extramembraneous catalytic core and F(0) containing the membrane proton channel, linked together by a central stalk and a peripheral stalk. During catalysis, ATP synthesis in the catalytic domain of F(1) is coupled via a rotary mechanism of the central stalk subunits to proton translocation. Its function is as follows. Component of the F(0) channel, it forms part of the peripheral stalk, linking F(1) to F(0). This Caulobacter sp. (strain K31) protein is ATP synthase subunit b.